Consider the following 306-residue polypeptide: Large ribosomal subunit protein bL19m (306 aa).

The span at 34-43 (ENQEEQKKEA) shows a compositional bias: basic and acidic residues. The tract at residues 34-53 (ENQEEQKKEAPPTTPTSPVN) is disordered.

This sequence belongs to the bacterial ribosomal protein bL19 family. As to quaternary structure, component of the mitochondrial ribosome large subunit (39S) which comprises a 16S rRNA and about 50 distinct proteins.

Its subcellular location is the mitochondrion. The polypeptide is Large ribosomal subunit protein bL19m (mRpL19) (Drosophila melanogaster (Fruit fly)).